The following is a 336-amino-acid chain: Mitochondrial thiamine pyrophosphate carrier 1 (336 aa).

Solcar repeat units follow at residues 11–98, 112–202, and 221–323; these read ISST…VNQV, SSGA…VKDS, and TKGW…SLSI. A run of 6 helical transmembrane segments spans residues 17–37, 66–86, 118–138, 177–197, 228–244, and 298–315; these read MLCG…LDVV, GVTA…FYGA, FIAG…FDLF, GVSS…ASYG, TAGL…VFPL, and GFLV…ITMY.

This sequence belongs to the mitochondrial carrier (TC 2.A.29) family.

The protein resides in the mitochondrion inner membrane. Mitochondrial transporter that mediates uptake of thiamine pyrophosphate (ThPP) into mitochondria. The protein is Mitochondrial thiamine pyrophosphate carrier 1 (TPC1) of Yarrowia lipolytica (strain CLIB 122 / E 150) (Yeast).